The sequence spans 314 residues: Acetyl-coenzyme A carboxylase carboxyl transferase subunit alpha (314 aa).

Positions 32-289 (EIDMLEASLK…KKMFLKHLNE (258 aa)) constitute a CoA carboxyltransferase C-terminal domain.

Belongs to the AccA family. In terms of assembly, acetyl-CoA carboxylase is a heterohexamer composed of biotin carboxyl carrier protein (AccB), biotin carboxylase (AccC) and two subunits each of ACCase subunit alpha (AccA) and ACCase subunit beta (AccD).

It is found in the cytoplasm. The catalysed reaction is N(6)-carboxybiotinyl-L-lysyl-[protein] + acetyl-CoA = N(6)-biotinyl-L-lysyl-[protein] + malonyl-CoA. Its pathway is lipid metabolism; malonyl-CoA biosynthesis; malonyl-CoA from acetyl-CoA: step 1/1. Component of the acetyl coenzyme A carboxylase (ACC) complex. First, biotin carboxylase catalyzes the carboxylation of biotin on its carrier protein (BCCP) and then the CO(2) group is transferred by the carboxyltransferase to acetyl-CoA to form malonyl-CoA. This is Acetyl-coenzyme A carboxylase carboxyl transferase subunit alpha from Staphylococcus epidermidis (strain ATCC 12228 / FDA PCI 1200).